The following is a 141-amino-acid chain: Transcription antitermination protein NusB (141 aa).

Belongs to the NusB family.

Involved in transcription antitermination. Required for transcription of ribosomal RNA (rRNA) genes. Binds specifically to the boxA antiterminator sequence of the ribosomal RNA (rrn) operons. In Fervidobacterium nodosum (strain ATCC 35602 / DSM 5306 / Rt17-B1), this protein is Transcription antitermination protein NusB.